The sequence spans 327 residues: Fructose-1,6-bisphosphatase class 1 (327 aa).

Mg(2+) contacts are provided by Glu84, Asp103, Leu105, and Asp106. Substrate-binding positions include 106–109 (DGSS), Asn198, and Lys264. Glu270 contributes to the Mg(2+) binding site.

It belongs to the FBPase class 1 family. As to quaternary structure, homotetramer. Requires Mg(2+) as cofactor.

Its subcellular location is the cytoplasm. It carries out the reaction beta-D-fructose 1,6-bisphosphate + H2O = beta-D-fructose 6-phosphate + phosphate. It functions in the pathway carbohydrate biosynthesis; gluconeogenesis. This chain is Fructose-1,6-bisphosphatase class 1, found in Psychrobacter cryohalolentis (strain ATCC BAA-1226 / DSM 17306 / VKM B-2378 / K5).